The following is a 176-amino-acid chain: ATP-dependent protease subunit HslV (176 aa).

Thr4 is an active-site residue. Positions 158, 161, and 164 each coordinate Na(+).

It belongs to the peptidase T1B family. HslV subfamily. A double ring-shaped homohexamer of HslV is capped on each side by a ring-shaped HslU homohexamer. The assembly of the HslU/HslV complex is dependent on binding of ATP.

It is found in the cytoplasm. It catalyses the reaction ATP-dependent cleavage of peptide bonds with broad specificity.. Allosterically activated by HslU binding. In terms of biological role, protease subunit of a proteasome-like degradation complex believed to be a general protein degrading machinery. The chain is ATP-dependent protease subunit HslV from Rhizobium meliloti (strain 1021) (Ensifer meliloti).